Here is a 682-residue protein sequence, read N- to C-terminus: Solute carrier organic anion transporter family member 2B1 (682 aa).

The interval 1–30 is disordered; that stretch reads MPDRSTKATMGAEDIHERKVSMEPRDSHQD. Residues 1 to 41 are Cytoplasmic-facing; that stretch reads MPDRSTKATMGAEDIHERKVSMEPRDSHQDAQPRGMFQNIK. Basic and acidic residues predominate over residues 13-30; sequence EDIHERKVSMEPRDSHQD. Ser21 bears the Phosphoserine mark. A helical transmembrane segment spans residues 42–61; it reads FFVLCHSILQLAQLMISGYL. At 62–80 the chain is on the extracellular side; sequence KSSISTVEKRFGLSSQTSG. The chain crosses the membrane as a helical span at residues 81 to 101; the sequence is LLAAFNEVGNISLILFVSYFG. Residues 102-107 are Cytoplasmic-facing; it reads SRVHRP. A helical membrane pass occupies residues 108–132; that stretch reads RMIGCGAILVAVAGLLMALPHFISE. The Extracellular portion of the chain corresponds to 133 to 176; sequence PYRYDHSSPDRSQDFEASLCLPTTMAPASALSNDSCSSRTETKH. The N-linked (GlcNAc...) asparagine glycan is linked to Asn165. Residues 177-206 traverse the membrane as a helical segment; that stretch reads LTMVGIMFTAQTLLGIGGVPIQPFGISYID. The Cytoplasmic portion of the chain corresponds to 207–225; it reads DFAHHSNSPLYLGILFAIT. The helical transmembrane segment at 226-246 threads the bilayer; sequence MMGPGLAYGLGSLMLRLYVDI. Residues 247–264 are Extracellular-facing; that stretch reads DRMPEGGINLTTKDPRWV. Asn255 carries an N-linked (GlcNAc...) asparagine glycan. Residues 265 to 289 form a helical membrane-spanning segment; sequence GAWWLGFLISAGLVVLAASPYFFFP. Residues 290–354 lie on the Cytoplasmic side of the membrane; sequence REMPKEKYEL…IKVFPRVLLR (65 aa). Residues Ser311 and Ser314 each carry the phosphoserine modification. The chain crosses the membrane as a helical span at residues 355–376; it reads TLRHPIFLLVVLSQVCTSSMVA. At 377–396 the chain is on the extracellular side; that stretch reads GTATFLPKFLERQFSITASF. The chain crosses the membrane as a helical span at residues 397 to 420; it reads ANLLLGCLTIPLAIVGIVVGGVLV. The Cytoplasmic portion of the chain corresponds to 421-424; it reads KRLH. Residues 425–448 form a helical membrane-spanning segment; it reads LSPMQCSALCLLGSLLCLLLSLPL. Residues 449–552 are Extracellular-facing; the sequence is FFIGCSTHHI…SACSRLVLPF (104 aa). Residues 471–531 form the Kazal-like domain; the sequence is PSLFPGCSEP…VFYTNCSCVA (61 aa). 3 cysteine pairs are disulfide-bonded: Cys477-Cys508, Cys483-Cys504, and Cys492-Cys529. N-linked (GlcNAc...) asparagine glycosylation is found at Asn526 and Asn533. Residues 553–575 form a helical membrane-spanning segment; sequence ILLISLGAAVASITHTPSFMLIL. At 576–584 the chain is on the cytoplasmic side; that stretch reads RGVKKEDKT. Residues 585–610 form a helical membrane-spanning segment; sequence LAVGMQFMLLRVLAWMPSPVIHGSAI. Residues 611–643 lie on the Extracellular side of the membrane; the sequence is DTTCVHWALTCGRRAVCRYYDHDLLRNRFIGLQ. Residues 644-661 form a helical membrane-spanning segment; sequence FFFKSGSLVCFALVLAIL. Topologically, residues 662–682 are cytoplasmic; the sequence is RQQSREASTKATVKSSDLQEL.

This sequence belongs to the organo anion transporter (TC 2.A.60) family. As to expression, expressed in liver, kidney, heart, lung and retina. Widely distributed in all brain regions.

It localises to the cell membrane. It is found in the basal cell membrane. The protein resides in the apical cell membrane. It carries out the reaction coproporphyrin III(out) = coproporphyrin III(in). It catalyses the reaction substance P(out) = substance P(in). The enzyme catalyses taurocholate(out) = taurocholate(in). The catalysed reaction is prostaglandin E1(out) = prostaglandin E1(in). It carries out the reaction prostaglandin E2(out) = prostaglandin E2(in). It catalyses the reaction prostaglandin D2(out) = prostaglandin D2(in). The enzyme catalyses leukotriene C4(out) = leukotriene C4(in). The catalysed reaction is L-thyroxine(out) = L-thyroxine(in). Mediates the Na(+)-independent transport of organic anions such as taurocholate, the prostaglandins D2 (PGD2), E1 (PGE1) and E2 (PGE2), leukotriene C4, thromboxane B2 and L-thyroxine. Also plays a role in the reuptake of neuropeptides such as substance P/TAC1 and vasoactive intestinal peptide/VIP released from retinal neurons. May act as a heme transporter that promotes cellular iron availability. Also transports heme by-product coproporphyrin III (CPIII), and may be involved in their hepatic disposition. May contribute to regulate the transport of organic compounds in testis across the blood-testis-barrier. Shows a pH-sensitive substrate specificity which may be ascribed to the protonation state of the binding site and leads to a stimulation of substrate transport in an acidic microenvironment. The exact transport mechanism has not been yet deciphered but most likely involves an anion exchange, coupling the cellular uptake of organic substrate with the efflux of an anionic compound. Hydrogencarbonate/HCO3(-) acts as a probable counteranion that exchanges for organic anions. Cytoplasmic glutamate may also act as counteranion in the placenta. The chain is Solute carrier organic anion transporter family member 2B1 from Rattus norvegicus (Rat).